Here is a 167-residue protein sequence, read N- to C-terminus: NADPH-dependent 7-cyano-7-deazaguanine reductase (167 aa).

Residues 1 to 24 (MTTRSQDQTRDLKVLGTGRLTSPE) form a disordered region. Cys-57 functions as the Thioimide intermediate in the catalytic mechanism. The active-site Proton donor is Asp-64. Substrate contacts are provided by residues 79-81 (VES) and 98-99 (ME).

This sequence belongs to the GTP cyclohydrolase I family. QueF type 1 subfamily.

It is found in the cytoplasm. It carries out the reaction 7-aminomethyl-7-carbaguanine + 2 NADP(+) = 7-cyano-7-deazaguanine + 2 NADPH + 3 H(+). Its pathway is tRNA modification; tRNA-queuosine biosynthesis. Catalyzes the NADPH-dependent reduction of 7-cyano-7-deazaguanine (preQ0) to 7-aminomethyl-7-deazaguanine (preQ1). This chain is NADPH-dependent 7-cyano-7-deazaguanine reductase, found in Desulfovibrio desulfuricans (strain ATCC 27774 / DSM 6949 / MB).